The following is a 607-amino-acid chain: Vacuolar fusion protein MON1 homolog (607 aa).

A compositionally biased stretch (low complexity) spans 1–14; that stretch reads MATSDSRSSPSSSD. 2 disordered regions span residues 1-173 and 463-486; these read MATS…DDAS and PIDR…DISV. Positions 21-55 are enriched in polar residues; that stretch reads NPSSDPETNSERVQSQLESMNLSQPSEVSDGSHTE.

The protein belongs to the MON1/SAND family. As to quaternary structure, interacts with CCZ1A, CCZ1B and RABF2B. In terms of tissue distribution, widely expressed at stable levels.

It localises to the endosome. It is found in the prevacuolar compartment. In terms of biological role, plays an important role in membrane trafficking through the secretory apparatus. In complex with CCZ1, acts as a guanine exchange factor (GEF) for RABG3F of the Rab7 protein family. Promotes the exchange of GDP to GTP, converting RABG3F from an inactive GDP-bound form into an active GTP-bound form. The RABG3F active form is involved in protein trafficking from prevacuolar compartments (PVCs) to vacuoles. May serve as a linker between Rab5 and Rab7 protein families in PVCs and mediate PVC maturation. This Arabidopsis thaliana (Mouse-ear cress) protein is Vacuolar fusion protein MON1 homolog.